A 1118-amino-acid polypeptide reads, in one-letter code: Protein SUPPRESSOR OF NPR1-1 CONSTITUTIVE 4 (1118 aa).

A signal peptide spans 1-35 (MNSQQSTRTKQMLQQSSTHLLCGVVLLQLFAAQVD). Over 36 to 751 (AQRSTSPWQT…PLRNFLKVIR (716 aa)) the chain is Extracellular. The GP-PDE 1 domain maps to 51–353 (PLVIARGGFS…DFPLTASASV (303 aa)). 13 N-linked (GlcNAc...) asparagine glycosylation sites follow: Asn106, Asn195, Asn251, Asn260, Asn318, Asn335, Asn362, Asn422, Asn433, Asn497, Asn557, Asn573, and Asn656. Residues 369 to 670 (FLVISKNGAS…EFPYTAARYK (302 aa)) form the GP-PDE 2 domain. The chain crosses the membrane as a helical span at residues 752–772 (IVSWSVAGVVLFLVLLTLVFC). Topologically, residues 773–1118 (FHRKRETRLR…SEDVSVYTEG (346 aa)) are cytoplasmic. The Protein kinase domain occupies 805–1094 (KSFAEVVGRG…ALEVPPRPVL (290 aa)). ATP-binding positions include 811–819 (VGRGGFGIV) and Lys833. The Proton acceptor role is filled by Asp928.

The protein in the N-terminal section; belongs to the glycerophosphoryl diester phosphodiesterase family. This sequence in the C-terminal section; belongs to the protein kinase superfamily. Ser/Thr protein kinase family. As to expression, expressed in shoots, rosette and cauline leaves, stems, flowers and siliques.

The protein resides in the cell membrane. The catalysed reaction is a sn-glycero-3-phosphodiester + H2O = an alcohol + sn-glycerol 3-phosphate + H(+). It catalyses the reaction L-seryl-[protein] + ATP = O-phospho-L-seryl-[protein] + ADP + H(+). The enzyme catalyses L-threonyl-[protein] + ATP = O-phospho-L-threonyl-[protein] + ADP + H(+). Atypical receptor-like kinase involved in disease resistance. This is Protein SUPPRESSOR OF NPR1-1 CONSTITUTIVE 4 from Arabidopsis thaliana (Mouse-ear cress).